The following is a 183-amino-acid chain: Negative modulator of initiation of replication (183 aa).

The tract at residues 43–70 is disordered; it reads VNDTQPVSAPAPSKAAPSAGNESRPQDR. The segment covering 50–61 has biased composition (low complexity); that stretch reads SAPAPSKAAPSA. Interaction with DNA stretches follow at residues 89-90, 118-122, and 152-158; these read AV, RTRIY, and NTNTGRK.

Belongs to the SeqA family. Homodimer. Polymerizes to form helical filaments.

It localises to the cytoplasm. Negative regulator of replication initiation, which contributes to regulation of DNA replication and ensures that replication initiation occurs exactly once per chromosome per cell cycle. Binds to pairs of hemimethylated GATC sequences in the oriC region, thus preventing assembly of replication proteins and re-initiation at newly replicated origins. Repression is relieved when the region becomes fully methylated. The chain is Negative modulator of initiation of replication from Pantoea ananatis (strain AJ13355).